A 142-amino-acid polypeptide reads, in one-letter code: Large ribosomal subunit protein uL13 (142 aa).

The protein belongs to the universal ribosomal protein uL13 family. As to quaternary structure, part of the 50S ribosomal subunit.

Functionally, this protein is one of the early assembly proteins of the 50S ribosomal subunit, although it is not seen to bind rRNA by itself. It is important during the early stages of 50S assembly. The chain is Large ribosomal subunit protein uL13 from Syntrophotalea carbinolica (strain DSM 2380 / NBRC 103641 / GraBd1) (Pelobacter carbinolicus).